The chain runs to 397 residues: Elongation factor Tu (397 aa).

A tr-type G domain is found at 10 to 207 (KPHVNVGTIG…TLDAYIPEPE (198 aa)). Positions 19–26 (GHVDHGKT) are G1. 19 to 26 (GHVDHGKT) is a binding site for GTP. Position 26 (threonine 26) interacts with Mg(2+). Positions 60–64 (GITIA) are G2. Positions 81–84 (DCPG) are G3. GTP contacts are provided by residues 81–85 (DCPGH) and 136–139 (NKAD). A G4 region spans residues 136 to 139 (NKAD). The tract at residues 174-176 (SAL) is G5.

Belongs to the TRAFAC class translation factor GTPase superfamily. Classic translation factor GTPase family. EF-Tu/EF-1A subfamily. Monomer.

It localises to the cytoplasm. The enzyme catalyses GTP + H2O = GDP + phosphate + H(+). GTP hydrolase that promotes the GTP-dependent binding of aminoacyl-tRNA to the A-site of ribosomes during protein biosynthesis. The chain is Elongation factor Tu from Hahella chejuensis (strain KCTC 2396).